We begin with the raw amino-acid sequence, 623 residues long: MFPQRLDSTVAYAIAKAMIDGFNRHYRLFRTESARAKHRFETADWHGQQRAQRERIEFYDLRVREASIRLEREFKAGEQPMDVWHQVKLHYIGLLVNHHQPELAETFFNSVTTKILHRSYFQNDFIFVRPAVSTEYIENQEPTAQPTYRAYYPTQGNMHETLVKLVEDFGLCREFEDLRRDAGYVAEAMAARLGDVKLRANFQIQVLSGLFFRNKGAYVVGKIINGFGEIPFALPILHRQPAPGQVLPADGKGISSQSDAGKLVIDAALFGEDDLLILFSFARAYFMVDMGIPSAFVQFLRSMMPRMPRAEIYNALGLAKQGKTLFYRDFLHHLRHSTDKFRIAPGIKGMVMLVFDLPSFPYVFKVIKDYYPPQKDTTREQIKGKYLLVKQHDRVGRMADTQEYSEVAFPRERFSDELIAEIEKFAPSQLEISDRDGDGQMEVIIKHVYIERRMIPLNIYLQEAFDFGVAEPAARDQIERAVVEYGNAIKDMVAANIFPGDMLWKNFGITRHGKVVFYDYDEIEYITDCKFRKVPTPRNEEDEMSGEVWYSVGPKDVFPETFGPFLLGNDAVREVFMKHHADLLDAAFWQRHQARIQAGHVYDVFPYDQQKRFAVMHGPARAG.

ATP-binding positions include 344–350 (APGIKGM) and lysine 365. Aspartate 400 is a catalytic residue.

The protein belongs to the AceK family.

Its subcellular location is the cytoplasm. It carries out the reaction L-seryl-[isocitrate dehydrogenase] + ATP = O-phospho-L-seryl-[isocitrate dehydrogenase] + ADP + H(+). Its function is as follows. Bifunctional enzyme which can phosphorylate or dephosphorylate isocitrate dehydrogenase (IDH) on a specific serine residue. This is a regulatory mechanism which enables bacteria to bypass the Krebs cycle via the glyoxylate shunt in response to the source of carbon. When bacteria are grown on glucose, IDH is fully active and unphosphorylated, but when grown on acetate or ethanol, the activity of IDH declines drastically concomitant with its phosphorylation. The sequence is that of Isocitrate dehydrogenase kinase/phosphatase from Polaromonas naphthalenivorans (strain CJ2).